Consider the following 314-residue polypeptide: DNA-directed RNA polymerase subunit alpha (314 aa).

An alpha N-terminal domain (alpha-NTD) region spans residues 1–228 (MIEIEKPRIE…EHLNIFVGLT (228 aa)). An alpha C-terminal domain (alpha-CTD) region spans residues 246–314 (EKVLEMSIEE…DLGLGLRKED (69 aa)).

It belongs to the RNA polymerase alpha chain family. As to quaternary structure, homodimer. The RNAP catalytic core consists of 2 alpha, 1 beta, 1 beta' and 1 omega subunit. When a sigma factor is associated with the core the holoenzyme is formed, which can initiate transcription.

It catalyses the reaction RNA(n) + a ribonucleoside 5'-triphosphate = RNA(n+1) + diphosphate. In terms of biological role, DNA-dependent RNA polymerase catalyzes the transcription of DNA into RNA using the four ribonucleoside triphosphates as substrates. This Staphylococcus aureus (strain Mu3 / ATCC 700698) protein is DNA-directed RNA polymerase subunit alpha.